The primary structure comprises 626 residues: Leucine-rich repeat and fibronectin type-III domain-containing protein 3 (626 aa).

The N-terminal stretch at 1 to 16 is a signal peptide; it reads MAVLPLLLCLLPLAPA. At 17–539 the chain is on the extracellular side; sequence SSPPQPATSS…PHAPFLGGTM (523 aa). The LRRNT domain maps to 19 to 59; the sequence is PPQPATSSPCPRRCRCQTQSLPLSVLCPGAGLLFVPPSLDR. LRR repeat units lie at residues 84-105, 108-129, 132-153, 157-178, 181-202, and 205-226; these read GLLH…AFAD, ALRA…QLRG, NLRH…ALDD, TLED…ALGR, NVNT…AFSR, and KLAR…PLFS. In terms of domain architecture, LRRCT spans 249 to 295; the sequence is NPLHCNCELVWLRRLAREDDLEACASPPALGGRYFWAVGEEEFVCEP. One can recognise an Ig-like domain in the interval 295-382; the sequence is PPVVTHRSPP…GEATAAVELT (88 aa). The region spanning 308–395 is the Fibronectin type-III 1 domain; the sequence is PAGRPAALRC…PPPPQLANST (88 aa). The cysteines at positions 317 and 366 are disulfide-linked. N-linked (GlcNAc...) asparagine glycans are attached at residues asparagine 339, asparagine 348, and asparagine 393. The interval 382 to 423 is disordered; sequence TVGPPPPPQLANSTSCDPPRDGEPDALTPPSAASASAKVADT. Over residues 406–423 the composition is skewed to low complexity; sequence DALTPPSAASASAKVADT. A Fibronectin type-III 2 domain is found at 425-523; that stretch reads APTDRGVQVT…GCARFSTEPA (99 aa). A helical membrane pass occupies residues 540-560; it reads IIALGGVIVASVLVFIFVLLL. Over 561-626 the chain is Cytoplasmic; it reads RYKVHGVQPP…WGPSHEPAGP (66 aa).

This sequence belongs to the LRFN family. Can form heteromeric complexes with LRFN1, LRFN2, LRFN4 and LRFN5. Able to form homomeric complexes across cell junctions, between adjacent cells. Does not interact with DLG4. Post-translationally, N-glycosylated. As to expression, expressed in brain. Within brain, expressed in hippocampus, cerebellum, olfactory bulb and forebrain (at protein level).

Its subcellular location is the cell membrane. It localises to the cell projection. It is found in the axon. The protein resides in the dendrite. The protein localises to the synapse. Its subcellular location is the presynaptic cell membrane. It localises to the postsynaptic cell membrane. Functionally, cell adhesion molecule that mediates homophilic cell-cell adhesion in a Ca(2+)-independent manner. Promotes neurite outgrowth in hippocampal neurons. In Rattus norvegicus (Rat), this protein is Leucine-rich repeat and fibronectin type-III domain-containing protein 3.